The chain runs to 778 residues: MEKKILEQLEFEKVKEQFWPYLQTEQGQLELDLLEPIANKDKIQAYFTELEEMAAIFVEHHHFALGGLSDVSESMQRLDLEADLSIQELLVIKKLLQVSAEVCRFYADLENVDLVALKALFEKIESFPSLQGSLQAINDAGFVEGFASPELESIRRQISNKEHASRQLLQDILKKQAAYLSESLIASRNGRSVLPVKNTYRHKVAGVVHDMSASGSTVYIEPRALVSLNEELTQLQADERHEIGRILHELSEQLRPHSRSLRNNAWLLGHLDLVRAKYLYMQAKQATVPVISDDKSLQLLNARHPLIQNPVANDLHFANDLAVIVITGPNTGGKTIMLKTLGLAQVMAQSGLPILADKGSRVAVFNGIYADIGDEQSIEQSLSTFSSHMTHIVEILNQADSDSLILFDELGAGTDPQEGASLAMAILEQLRLTNIKTMATTHYPELKAYGIETAYVENASMAFDNVSLKPTYRFMQGVPGRSNAFDIARRLGLAEHIVKEAQAMTATDHDVNRIIEQLEQQTLESRKRLEHIKEVEQDNLKFNRAVKKLYNEFSHAKDKELEKAALEAREIVDIALAESDSILSQLHEKAELKPHEIIEAKHRLKQLAPEQSLSQNKVLKQAKKWRAPRVGDDIIVTAYGQRGTLLAQLKDKRWEAQVGLIKLTLKEDEFSLVKLKEEAQQPKKRAVKVVKKAATGKGPRARLDLRGKRYEEAMQELDAFIDQALLNNMSQVDIIHGIGTGVIREAVGKYLRRNKHVKSFGYAPQNAGGSGCTIANLG.

328–335 (GPNTGGKT) contacts ATP. One can recognise a Smr domain in the interval 703–778 (LDLRGKRYEE…GSGCTIANLG (76 aa)).

Belongs to the DNA mismatch repair MutS family. MutS2 subfamily. As to quaternary structure, homodimer. Binds to stalled ribosomes, contacting rRNA.

In terms of biological role, endonuclease that is involved in the suppression of homologous recombination and thus may have a key role in the control of bacterial genetic diversity. Acts as a ribosome collision sensor, splitting the ribosome into its 2 subunits. Detects stalled/collided 70S ribosomes which it binds and splits by an ATP-hydrolysis driven conformational change. Acts upstream of the ribosome quality control system (RQC), a ribosome-associated complex that mediates the extraction of incompletely synthesized nascent chains from stalled ribosomes and their subsequent degradation. Probably generates substrates for RQC. In Streptococcus equi subsp. zooepidemicus (strain H70), this protein is Endonuclease MutS2.